A 146-amino-acid polypeptide reads, in one-letter code: Small ribosomal subunit protein uS9 (146 aa).

S3 bears the Phosphoserine mark. The residue at position 60 (K60) is an N6-acetyllysine.

The protein belongs to the universal ribosomal protein uS9 family. Component of the small ribosomal subunit. Part of the small subunit (SSU) processome, composed of more than 70 proteins and the RNA chaperone small nucleolar RNA (snoRNA) U3.

It localises to the cytoplasm. It is found in the nucleus. Its subcellular location is the nucleolus. Its function is as follows. Component of the small ribosomal subunit. The ribosome is a large ribonucleoprotein complex responsible for the synthesis of proteins in the cell. Part of the small subunit (SSU) processome, first precursor of the small eukaryotic ribosomal subunit. During the assembly of the SSU processome in the nucleolus, many ribosome biogenesis factors, an RNA chaperone and ribosomal proteins associate with the nascent pre-rRNA and work in concert to generate RNA folding, modifications, rearrangements and cleavage as well as targeted degradation of pre-ribosomal RNA by the RNA exosome. The polypeptide is Small ribosomal subunit protein uS9 (RPS16) (Bos taurus (Bovine)).